The sequence spans 133 residues: UPF0102 protein AB57_1130 (133 aa).

It belongs to the UPF0102 family.

The polypeptide is UPF0102 protein AB57_1130 (Acinetobacter baumannii (strain AB0057)).